Reading from the N-terminus, the 252-residue chain is 5-oxoprolinase subunit A (252 aa).

It belongs to the LamB/PxpA family. As to quaternary structure, forms a complex composed of PxpA, PxpB and PxpC.

The catalysed reaction is 5-oxo-L-proline + ATP + 2 H2O = L-glutamate + ADP + phosphate + H(+). Its function is as follows. Catalyzes the cleavage of 5-oxoproline to form L-glutamate coupled to the hydrolysis of ATP to ADP and inorganic phosphate. This chain is 5-oxoprolinase subunit A, found in Staphylococcus carnosus (strain TM300).